Reading from the N-terminus, the 298-residue chain is 4-hydroxy-tetrahydrodipicolinate synthase (298 aa).

Thr-45 contacts pyruvate. Catalysis depends on Tyr-133, which acts as the Proton donor/acceptor. The Schiff-base intermediate with substrate role is filled by Lys-161. Ile-203 contacts pyruvate.

It belongs to the DapA family. In terms of assembly, homotetramer; dimer of dimers.

Its subcellular location is the cytoplasm. It catalyses the reaction L-aspartate 4-semialdehyde + pyruvate = (2S,4S)-4-hydroxy-2,3,4,5-tetrahydrodipicolinate + H2O + H(+). It functions in the pathway amino-acid biosynthesis; L-lysine biosynthesis via DAP pathway; (S)-tetrahydrodipicolinate from L-aspartate: step 3/4. Functionally, catalyzes the condensation of (S)-aspartate-beta-semialdehyde [(S)-ASA] and pyruvate to 4-hydroxy-tetrahydrodipicolinate (HTPA). The polypeptide is 4-hydroxy-tetrahydrodipicolinate synthase (Wigglesworthia glossinidia brevipalpis).